The following is an 842-amino-acid chain: Elongation factor 2 (842 aa).

The 330-residue stretch at 17–346 folds into the tr-type G domain; that stretch reads TNVRNMSVIA…MIVMHLPSPV (330 aa). GTP contacts are provided by residues 26–33, 158–161, and 213–215; these read AHVDHGKS, NKVD, and SGL. Position 699 is a diphthamide (His-699).

The protein belongs to the TRAFAC class translation factor GTPase superfamily. Classic translation factor GTPase family. EF-G/EF-2 subfamily.

It is found in the cytoplasm. It catalyses the reaction GTP + H2O = GDP + phosphate + H(+). Functionally, catalyzes the GTP-dependent ribosomal translocation step during translation elongation. During this step, the ribosome changes from the pre-translocational (PRE) to the post-translocational (POST) state as the newly formed A-site-bound peptidyl-tRNA and P-site-bound deacylated tRNA move to the P and E sites, respectively. Catalyzes the coordinated movement of the two tRNA molecules, the mRNA and conformational changes in the ribosome. This Candida glabrata (strain ATCC 2001 / BCRC 20586 / JCM 3761 / NBRC 0622 / NRRL Y-65 / CBS 138) (Yeast) protein is Elongation factor 2 (EFT1).